Here is a 251-residue protein sequence, read N- to C-terminus: 5'-nucleotidase SurE (251 aa).

D8, D9, S39, and N90 together coordinate a divalent metal cation.

It belongs to the SurE nucleotidase family. It depends on a divalent metal cation as a cofactor.

Its subcellular location is the cytoplasm. It carries out the reaction a ribonucleoside 5'-phosphate + H2O = a ribonucleoside + phosphate. In terms of biological role, nucleotidase that shows phosphatase activity on nucleoside 5'-monophosphates. This is 5'-nucleotidase SurE from Colwellia psychrerythraea (strain 34H / ATCC BAA-681) (Vibrio psychroerythus).